A 237-amino-acid polypeptide reads, in one-letter code: Pyridoxal phosphate homeostasis protein (237 aa).

Residue K35 is modified to N6-(pyridoxal phosphate)lysine.

This sequence belongs to the pyridoxal phosphate-binding protein YggS/PROSC family.

Functionally, pyridoxal 5'-phosphate (PLP)-binding protein, which is involved in PLP homeostasis. This chain is Pyridoxal phosphate homeostasis protein, found in Haemophilus influenzae (strain ATCC 51907 / DSM 11121 / KW20 / Rd).